The chain runs to 882 residues: DNA mismatch repair protein MutS (882 aa).

Position 627–634 (627–634 (GPNMAGKS)) interacts with ATP.

Belongs to the DNA mismatch repair MutS family.

In terms of biological role, this protein is involved in the repair of mismatches in DNA. It is possible that it carries out the mismatch recognition step. This protein has a weak ATPase activity. The polypeptide is DNA mismatch repair protein MutS (Anaeromyxobacter dehalogenans (strain 2CP-C)).